A 280-amino-acid chain; its full sequence is 4-diphosphocytidyl-2-C-methyl-D-erythritol kinase (280 aa).

Residue Lys8 is part of the active site. 91-101 (PVAAGLAGGST) serves as a coordination point for ATP. Residue Asp133 is part of the active site.

This sequence belongs to the GHMP kinase family. IspE subfamily.

It carries out the reaction 4-CDP-2-C-methyl-D-erythritol + ATP = 4-CDP-2-C-methyl-D-erythritol 2-phosphate + ADP + H(+). Its pathway is isoprenoid biosynthesis; isopentenyl diphosphate biosynthesis via DXP pathway; isopentenyl diphosphate from 1-deoxy-D-xylulose 5-phosphate: step 3/6. In terms of biological role, catalyzes the phosphorylation of the position 2 hydroxy group of 4-diphosphocytidyl-2C-methyl-D-erythritol. The polypeptide is 4-diphosphocytidyl-2-C-methyl-D-erythritol kinase (Clostridium botulinum (strain Loch Maree / Type A3)).